Reading from the N-terminus, the 453-residue chain is Carbamoyl phosphate synthase arginine-specific small chain (453 aa).

A mitochondrion-targeting transit peptide spans 1 to 33; that stretch reads MFSRLAARLPKASALNGVAARQVRNLSQPAITG. A disordered region spans residues 26-50; the sequence is LSQPAITGSKGRNMPAREPRTTAAA. Positions 97, 280, and 282 each coordinate L-glutamine. Residues 233-420 form the Glutamine amidotransferase type-1 domain; that stretch reads HVALIDCGVK…MENVELFKSN (188 aa). The active-site Nucleophile is Cys-309. Leu-310, Gln-313, Asn-351, Gly-353, and Tyr-354 together coordinate L-glutamine. Residues His-393 and Glu-395 contribute to the active site.

Belongs to the CarA family. Heterodimer composed of 2 chains; the small (or glutamine) chain promotes the hydrolysis of glutamine to ammonia, which is used by the large (or ammonia) chain to synthesize carbamoyl phosphate.

The protein resides in the mitochondrion matrix. It catalyses the reaction hydrogencarbonate + L-glutamine + 2 ATP + H2O = carbamoyl phosphate + L-glutamate + 2 ADP + phosphate + 2 H(+). The catalysed reaction is L-glutamine + H2O = L-glutamate + NH4(+). Its pathway is amino-acid biosynthesis; L-arginine biosynthesis; carbamoyl phosphate from bicarbonate: step 1/1. Small subunit of the arginine-specific carbamoyl phosphate synthase (CPSase). CPSase catalyzes the formation of carbamoyl phosphate from the ammonia moiety of glutamine, carbonate, and phosphate donated by ATP, the first step of the arginine biosynthetic pathway. The small subunit (glutamine amidotransferase) binds and cleaves glutamine to supply the large subunit with the substrate ammonia. The chain is Carbamoyl phosphate synthase arginine-specific small chain (arg-2) from Neurospora crassa (strain ATCC 24698 / 74-OR23-1A / CBS 708.71 / DSM 1257 / FGSC 987).